Here is a 319-residue protein sequence, read N- to C-terminus: Ornithine carbamoyltransferase (319 aa).

Residues 55–58, glutamine 82, arginine 106, and 133–136 contribute to the carbamoyl phosphate site; these read STRT and HPCQ. Residues asparagine 171, aspartate 234, and 238 to 239 each bind L-ornithine; that span reads SM. Carbamoyl phosphate is bound by residues 274–275 and arginine 302; that span reads CL.

It belongs to the aspartate/ornithine carbamoyltransferase superfamily. OTCase family.

It localises to the cytoplasm. The enzyme catalyses carbamoyl phosphate + L-ornithine = L-citrulline + phosphate + H(+). It functions in the pathway amino-acid biosynthesis; L-arginine biosynthesis; L-arginine from L-ornithine and carbamoyl phosphate: step 1/3. Functionally, reversibly catalyzes the transfer of the carbamoyl group from carbamoyl phosphate (CP) to the N(epsilon) atom of ornithine (ORN) to produce L-citrulline. This chain is Ornithine carbamoyltransferase (argF), found in Corynebacterium glutamicum (strain ATCC 13032 / DSM 20300 / JCM 1318 / BCRC 11384 / CCUG 27702 / LMG 3730 / NBRC 12168 / NCIMB 10025 / NRRL B-2784 / 534).